We begin with the raw amino-acid sequence, 320 residues long: Sucrose operon repressor (320 aa).

An HTH lacI-type domain is found at 1–55 (MKNIADIAKIAGVSKSTVSRYLNNGSVSLKTQQKLDEIIRENDYQPNQFAQSLRA). Positions 4–23 (IADIAKIAGVSKSTVSRYLN) form a DNA-binding region, H-T-H motif.

Negative regulator of scrB expression. This chain is Sucrose operon repressor (scrR), found in Staphylococcus xylosus.